The chain runs to 645 residues: Sister chromatid cohesion protein 1 (645 aa).

Disordered regions lie at residues 292–311 (FEPENVEPSRPQSPESFALE), 495–527 (QSGFAGENKENEDAEDWSDPFGSSNSSRRGQLE), and 619–645 (CPLSSPKPMGLGNTMENSTMRTPMRPV).

It belongs to the rad21 family. As to quaternary structure, component of the cohesin complex, composed of the smc-1 and smc-3 heterodimer attached via their hinge domain, scc-1 which links them, and scc-3. Interacts with smc-1, smc-3, scc-3 and tim-1.

It is found in the nucleus. The protein resides in the chromosome. The protein localises to the cytoplasm. Functionally, cleavable component of the cohesin complex involved in chromosome cohesion during cell cycle. The cohesin complex is required for the cohesion of sister chromatids after DNA replication. The cohesin complex apparently forms a large proteinaceous ring within which sister chromatids can be trapped. At metaphase-anaphase transition, this protein is cleaved and dissociates from chromatin, allowing sister chromatids to segregate. The protein is Sister chromatid cohesion protein 1 of Caenorhabditis elegans.